The sequence spans 386 residues: Protein RecA (386 aa).

76–83 lines the ATP pocket; that stretch reads GPESSGKT. Positions 362 to 386 are disordered; it reads FDDEDDDFDASTAPAGTFTEVTTEN.

The protein belongs to the RecA family.

It localises to the cytoplasm. In terms of biological role, can catalyze the hydrolysis of ATP in the presence of single-stranded DNA, the ATP-dependent uptake of single-stranded DNA by duplex DNA, and the ATP-dependent hybridization of homologous single-stranded DNAs. It interacts with LexA causing its activation and leading to its autocatalytic cleavage. The polypeptide is Protein RecA (Corynebacterium efficiens (strain DSM 44549 / YS-314 / AJ 12310 / JCM 11189 / NBRC 100395)).